Consider the following 574-residue polypeptide: Proline--tRNA ligase (574 aa).

Belongs to the class-II aminoacyl-tRNA synthetase family. ProS type 1 subfamily. In terms of assembly, homodimer.

Its subcellular location is the cytoplasm. The catalysed reaction is tRNA(Pro) + L-proline + ATP = L-prolyl-tRNA(Pro) + AMP + diphosphate. Its function is as follows. Catalyzes the attachment of proline to tRNA(Pro) in a two-step reaction: proline is first activated by ATP to form Pro-AMP and then transferred to the acceptor end of tRNA(Pro). As ProRS can inadvertently accommodate and process non-cognate amino acids such as alanine and cysteine, to avoid such errors it has two additional distinct editing activities against alanine. One activity is designated as 'pretransfer' editing and involves the tRNA(Pro)-independent hydrolysis of activated Ala-AMP. The other activity is designated 'posttransfer' editing and involves deacylation of mischarged Ala-tRNA(Pro). The misacylated Cys-tRNA(Pro) is not edited by ProRS. The protein is Proline--tRNA ligase of Fervidobacterium nodosum (strain ATCC 35602 / DSM 5306 / Rt17-B1).